We begin with the raw amino-acid sequence, 570 residues long: Hydroxylamine reductase (570 aa).

Residues cysteine 5, cysteine 8, cysteine 17, and cysteine 23 each contribute to the [4Fe-4S] cluster site. Positions 266, 290, 334, 425, 453, 478, 513, and 515 each coordinate hybrid [4Fe-2O-2S] cluster. Cysteine 425 carries the post-translational modification Cysteine persulfide.

Belongs to the HCP family. The cofactor is [4Fe-4S] cluster. Requires hybrid [4Fe-2O-2S] cluster as cofactor.

Its subcellular location is the cytoplasm. The catalysed reaction is A + NH4(+) + H2O = hydroxylamine + AH2 + H(+). Functionally, catalyzes the reduction of hydroxylamine to form NH(3) and H(2)O. The chain is Hydroxylamine reductase from Clostridium tetani (strain Massachusetts / E88).